The chain runs to 156 residues: C-type lectin lectoxin-Phi2 (156 aa).

The signal sequence occupies residues M1–A23. 3 cysteine pairs are disulfide-bonded: C27–C38, C55–C154, and C129–C146. Positions H34–K155 constitute a C-type lectin domain. N-linked (GlcNAc...) asparagine glycosylation is found at N35 and N109. A Mannose-binding motif is present at residues E119–N121. E127, N142, and D143 together coordinate Ca(2+).

Belongs to the true venom lectin family. Expressed by the venom gland.

The protein localises to the secreted. Mannose-binding lectin which recognizes specific carbohydrate structures and agglutinates a variety of animal cells by binding to cell-surface glycoproteins and glycolipids. May be a calcium-dependent lectin. This Philodryas olfersii (Green snake) protein is C-type lectin lectoxin-Phi2.